An 82-amino-acid polypeptide reads, in one-letter code: uncharacterized protein (82 aa).

2 helical membrane-spanning segments follow: residues 22-39 and 46-65; these read WASD…MFIA and LKMG…TWVI.

The protein localises to the cell membrane. This is an uncharacterized protein from Bacillus subtilis (strain 168).